The primary structure comprises 500 residues: ATP synthase subunit beta (500 aa).

G157–T164 is an ATP binding site.

Belongs to the ATPase alpha/beta chains family. As to quaternary structure, F-type ATPases have 2 components, CF(1) - the catalytic core - and CF(0) - the membrane proton channel. CF(1) has five subunits: alpha(3), beta(3), gamma(1), delta(1), epsilon(1). CF(0) has three main subunits: a(1), b(2) and c(9-12). The alpha and beta chains form an alternating ring which encloses part of the gamma chain. CF(1) is attached to CF(0) by a central stalk formed by the gamma and epsilon chains, while a peripheral stalk is formed by the delta and b chains.

The protein resides in the cell inner membrane. The enzyme catalyses ATP + H2O + 4 H(+)(in) = ADP + phosphate + 5 H(+)(out). Produces ATP from ADP in the presence of a proton gradient across the membrane. The catalytic sites are hosted primarily by the beta subunits. This chain is ATP synthase subunit beta, found in Salinibacter ruber (strain DSM 13855 / M31).